The sequence spans 156 residues: MSRRHAAEKREVLPDAKYGDLVLTKFMNNLMIDGKKSVAETIVYNALTRVETKIKRAPIEVFHEALDNIQPSVEVRSRRVGGATYQVPVEVRPERRQALAIRWLIKAARSRNENTMEERLAGELLDAVQSRGTAVKKREDTHKMADANKAFSHYRW.

The protein belongs to the universal ribosomal protein uS7 family. As to quaternary structure, part of the 30S ribosomal subunit. Contacts proteins S9 and S11.

Its function is as follows. One of the primary rRNA binding proteins, it binds directly to 16S rRNA where it nucleates assembly of the head domain of the 30S subunit. Is located at the subunit interface close to the decoding center, probably blocks exit of the E-site tRNA. This is Small ribosomal subunit protein uS7 from Roseobacter denitrificans (strain ATCC 33942 / OCh 114) (Erythrobacter sp. (strain OCh 114)).